Consider the following 211-residue polypeptide: Large ribosomal subunit protein bL9 (211 aa).

Positions 180–211 (DDIGAAGMDDDDDDAPAPAQADPSSEESSEED) are disordered.

Belongs to the bacterial ribosomal protein bL9 family.

Binds to the 23S rRNA. The polypeptide is Large ribosomal subunit protein bL9 (Jannaschia sp. (strain CCS1)).